The chain runs to 862 residues: Genome polyprotein (862 aa).

Gly2 is lipidated: N-myristoyl glycine; by host.

Belongs to the picornaviruses polyprotein family. Interacts with capsid protein VP1 and capsid protein VP3 to form heterotrimeric protomers. In terms of assembly, interacts with capsid protein VP0, and capsid protein VP3 to form heterotrimeric protomers. Five protomers subsequently associate to form pentamers which serve as building blocks for the capsid. Interacts with capsid protein VP2, capsid protein VP3 and capsid protein VP4 following cleavage of capsid protein VP0. As to quaternary structure, interacts with capsid protein VP1 and capsid protein VP3 in the mature capsid. Interacts with capsid protein VP0 and capsid protein VP1 to form heterotrimeric protomers. Five protomers subsequently associate to form pentamers which serve as building blocks for the capsid. Interacts with capsid protein VP4 in the mature capsid. Interacts with protein 2C; this interaction may be important for virion morphogenesis. In terms of assembly, interacts with capsid protein VP1 and capsid protein VP3. In terms of processing, specific enzymatic cleavages in vivo by the viral proteases yield processing intermediates and the mature proteins. Myristoylation is required for the formation of pentamers during virus assembly. Further assembly of 12 pentamers and a molecule of genomic RNA generates the provirion. Post-translationally, during virion maturation, immature virions are rendered infectious following cleavage of VP0 into VP4 and VP2. This maturation seems to be an autocatalytic event triggered by the presence of RNA in the capsid and it is followed by a conformational change infectious virion. In terms of processing, myristoylation is required during RNA encapsidation and formation of the mature virus particle.

The protein localises to the virion. The protein resides in the host cytoplasm. Forms an icosahedral capsid of pseudo T=3 symmetry with capsid proteins VP2 and VP3. The capsid is 300 Angstroms in diameter, composed of 60 copies of each capsid protein and enclosing the viral positive strand RNA genome. Capsid protein VP1 mainly forms the vertices of the capsid. Capsid protein VP1 interacts with host cell receptor to provide virion attachment to target host cells. This attachment induces virion internalization. Tyrosine kinases are probably involved in the entry process. After binding to its receptor, the capsid undergoes conformational changes. Capsid protein VP1 N-terminus (that contains an amphipathic alpha-helix) and capsid protein VP4 are externalized. Together, they shape a pore in the host membrane through which viral genome is translocated to host cell cytoplasm. In terms of biological role, forms an icosahedral capsid of pseudo T=3 symmetry with capsid proteins VP2 and VP3. The capsid is 300 Angstroms in diameter, composed of 60 copies of each capsid protein and enclosing the viral positive strand RNA genome. Its function is as follows. Lies on the inner surface of the capsid shell. After binding to the host receptor, the capsid undergoes conformational changes. Capsid protein VP4 is released, Capsid protein VP1 N-terminus is externalized, and together, they shape a pore in the host membrane through which the viral genome is translocated into the host cell cytoplasm. Functionally, component of immature procapsids, which is cleaved into capsid proteins VP4 and VP2 after maturation. Allows the capsid to remain inactive before the maturation step. The sequence is that of Genome polyprotein from Echovirus 16 (strain Harrington).